Consider the following 969-residue polypeptide: Leucine--tRNA ligase (969 aa).

Residues 46–56 carry the 'HIGH' region motif; the sequence is PYLNGVLHAGH. Positions 658-662 match the 'KMSKS' region motif; that stretch reads KLSKS. An ATP-binding site is contributed by Lys661.

Belongs to the class-I aminoacyl-tRNA synthetase family.

It localises to the cytoplasm. The enzyme catalyses tRNA(Leu) + L-leucine + ATP = L-leucyl-tRNA(Leu) + AMP + diphosphate. This Methanococcus aeolicus (strain ATCC BAA-1280 / DSM 17508 / OCM 812 / Nankai-3) protein is Leucine--tRNA ligase.